The sequence spans 594 residues: MTRGLELLIAQTILQGFDAQYGRFLEVTSGAQQRFEQADWHAVQQAMKQRIHLYDHHVGLVVEQLRCITEGKSTDVDFLLRVKQQYTQLLPDYPRFEIAESFFNSVYCRLFDHRSLTPERLFIFSSQPERPFRTLPRPLAKDFFPERGWSHLLGKVLSDLPLRLPWQNKARDIGYIIASLQEALGEELLATCHLQVANELFYRNKAAWLVGKLVMPMATLPFLLPIHRSEEGELFVDTCLTTHAEASIVFGFARSYFMVYAPLPGALVEWLREILPGKTTAELYMAIGCQKHAKTESYREYLHYITRCDEQFIEAPGIRGMVMLVFTLPGFDRVFKVIKDRFAPQKEMTAAHVRACYQLVKEHDRVGRMADTQEFENFVLDKRQIAPALLALLQAEAGNKLTDLGDRIVISHLYIERRMVPLNLWLEQVNGQALRDAVEEYGNAIRQLAAANIFPGDMLFKNFGVTRHGRVVFYDYDEICYMTEVNFREIPPPRYPEDELASEPWYSVSPGDVFPEEFRHWLCADPRIGPLFEEMHADLLRADYWRALQMRIKNGHVEDVYAYRRKQRFSVRYGADSRPDKAFTPPSGKVRRSA.

ATP contacts are provided by residues 315–321 (APGIRGM) and Lys336. The active site involves Asp371.

It belongs to the AceK family.

Its subcellular location is the cytoplasm. It catalyses the reaction L-seryl-[isocitrate dehydrogenase] + ATP = O-phospho-L-seryl-[isocitrate dehydrogenase] + ADP + H(+). Functionally, bifunctional enzyme which can phosphorylate or dephosphorylate isocitrate dehydrogenase (IDH) on a specific serine residue. This is a regulatory mechanism which enables bacteria to bypass the Krebs cycle via the glyoxylate shunt in response to the source of carbon. When bacteria are grown on glucose, IDH is fully active and unphosphorylated, but when grown on acetate or ethanol, the activity of IDH declines drastically concomitant with its phosphorylation. This Klebsiella pneumoniae subsp. pneumoniae (strain ATCC 700721 / MGH 78578) protein is Isocitrate dehydrogenase kinase/phosphatase.